The following is a 377-amino-acid chain: Mitogen-activated protein kinase mpkC (377 aa).

Residues 20-299 enclose the Protein kinase domain; sequence YVNPQPIGMG…AQDALRHPYL (280 aa). Residues 26–34 and K49 contribute to the ATP site; that span reads IGMGSFGLV. D141 serves as the catalytic Proton acceptor. T171 carries the phosphothreonine modification. A TXY motif is present at residues 171–173; it reads TGY. Position 173 is a phosphotyrosine (Y173).

Belongs to the protein kinase superfamily. Ser/Thr protein kinase family. MAP kinase subfamily. HOG1 sub-subfamily. Mg(2+) is required as a cofactor. In terms of processing, dually phosphorylated on Thr-171 and Tyr-173, which activates the enzyme.

The enzyme catalyses L-seryl-[protein] + ATP = O-phospho-L-seryl-[protein] + ADP + H(+). It carries out the reaction L-threonyl-[protein] + ATP = O-phospho-L-threonyl-[protein] + ADP + H(+). Its activity is regulated as follows. Activated by tyrosine and threonine phosphorylation. Its function is as follows. Mitogen-activated protein kinase required for growth on media where sorbitol or mannitol is the sole carbon source. The protein is Mitogen-activated protein kinase mpkC (mpkc) of Neosartorya fischeri (strain ATCC 1020 / DSM 3700 / CBS 544.65 / FGSC A1164 / JCM 1740 / NRRL 181 / WB 181) (Aspergillus fischerianus).